The chain runs to 601 residues: Amino-acid acetyltransferase, mitochondrial (601 aa).

Positions 401 to 558 (FTMDNLIASK…KKKQNNKKKK (158 aa)) constitute an N-acetyltransferase domain.

This sequence belongs to the acetyltransferase family.

It is found in the mitochondrion. The enzyme catalyses L-glutamate + acetyl-CoA = N-acetyl-L-glutamate + CoA + H(+). It participates in amino-acid biosynthesis; L-arginine biosynthesis; N(2)-acetyl-L-ornithine from L-glutamate: step 1/4. Functionally, N-acetylglutamate synthase involved in arginine biosynthesis. The sequence is that of Amino-acid acetyltransferase, mitochondrial (ARG2) from Lodderomyces elongisporus (strain ATCC 11503 / CBS 2605 / JCM 1781 / NBRC 1676 / NRRL YB-4239) (Yeast).